An 808-amino-acid chain; its full sequence is Probable E3 ubiquitin-protein ligase MARCHF10 (808 aa).

Disordered stretches follow at residues 33 to 81 (LRRQ…LTEP), 101 to 268 (QTSV…RKAS), and 284 to 415 (SRRE…EVGV). Over residues 34-49 (RRQEYRRDPNEKKRDQ) the composition is skewed to basic and acidic residues. The span at 237-249 (QAFQGKNSPQVLS) shows a compositional bias: polar residues. 2 stretches are compositionally biased toward basic and acidic residues: residues 330–349 (KNFE…RSEP) and 379–397 (LPDR…ENAK). Residues 651–721 (DSEEEGDLCR…EMCKQGLLVD (71 aa)) form an RING-CH-type zinc finger. Residues Cys659, Cys662, Cys677, Cys679, His687, Cys690, Cys711, and Cys714 each contribute to the Zn(2+) site. Positions 773–808 (ERERLSRNYPQPRTEENENSELGDGNEGSISQSQVV) are disordered.

It carries out the reaction S-ubiquitinyl-[E2 ubiquitin-conjugating enzyme]-L-cysteine + [acceptor protein]-L-lysine = [E2 ubiquitin-conjugating enzyme]-L-cysteine + N(6)-ubiquitinyl-[acceptor protein]-L-lysine.. It participates in protein modification; protein ubiquitination. Functionally, E3 ubiquitin-protein ligase. E3 ubiquitin ligases accept ubiquitin from an E2 ubiquitin-conjugating enzyme in the form of a thioester and then directly transfer the ubiquitin to targeted substrates. The protein is Probable E3 ubiquitin-protein ligase MARCHF10 of Homo sapiens (Human).